The sequence spans 400 residues: Formate-dependent phosphoribosylglycinamide formyltransferase (400 aa).

Residues Glu22–Leu23 and Glu82 contribute to the N(1)-(5-phospho-beta-D-ribosyl)glycinamide site. ATP is bound by residues Arg114, Lys155, Ser160–Gln165, Glu195–Val198, and Glu203. In terms of domain architecture, ATP-grasp spans Arg119 to Leu308. Mg(2+)-binding residues include Glu267 and Glu279. N(1)-(5-phospho-beta-D-ribosyl)glycinamide contacts are provided by residues Asp286, Lys356, and Arg363 to Arg364.

Belongs to the PurK/PurT family. As to quaternary structure, homodimer.

It carries out the reaction N(1)-(5-phospho-beta-D-ribosyl)glycinamide + formate + ATP = N(2)-formyl-N(1)-(5-phospho-beta-D-ribosyl)glycinamide + ADP + phosphate + H(+). It functions in the pathway purine metabolism; IMP biosynthesis via de novo pathway; N(2)-formyl-N(1)-(5-phospho-D-ribosyl)glycinamide from N(1)-(5-phospho-D-ribosyl)glycinamide (formate route): step 1/1. Functionally, involved in the de novo purine biosynthesis. Catalyzes the transfer of formate to 5-phospho-ribosyl-glycinamide (GAR), producing 5-phospho-ribosyl-N-formylglycinamide (FGAR). Formate is provided by PurU via hydrolysis of 10-formyl-tetrahydrofolate. The chain is Formate-dependent phosphoribosylglycinamide formyltransferase from Hahella chejuensis (strain KCTC 2396).